Consider the following 246-residue polypeptide: Thaumatin-like protein 1 (246 aa).

The signal sequence occupies residues 1 to 24; sequence MMKSQAALLGLTTLAILFFSGAHA. Cystine bridges form between Cys33/Cys245, Cys81/Cys91, Cys96/Cys103, Cys151/Cys234, Cys156/Cys217, Cys164/Cys180, Cys184/Cys193, and Cys194/Cys204.

The protein belongs to the thaumatin family. In terms of tissue distribution, equally expressed in the abscission zone and surrounding tissues of both fruitlets and leaves.

It localises to the secreted. May be involved in protecting plant tissues from pathogen infection. The chain is Thaumatin-like protein 1 from Prunus persica (Peach).